The sequence spans 310 residues: Probable GTP 3',8-cyclase (310 aa).

In terms of domain architecture, Radical SAM core spans 5-232 (RFGRPVTNLR…RRRKYFIPID (228 aa)). GTP is bound at residue Arg-14. Residues Cys-21 and Cys-25 each contribute to the [4Fe-4S] cluster site. An S-adenosyl-L-methionine-binding site is contributed by Tyr-27. Position 28 (Cys-28) interacts with [4Fe-4S] cluster. GTP is bound at residue Lys-61. Residue Gly-65 coordinates S-adenosyl-L-methionine. GTP is bound at residue Thr-90. Ser-114 provides a ligand contact to S-adenosyl-L-methionine. A GTP-binding site is contributed by Lys-150. Met-189 contacts S-adenosyl-L-methionine. The [4Fe-4S] cluster site is built by Cys-250 and Cys-253. 255–257 (RLR) is a GTP binding site. Cys-267 lines the [4Fe-4S] cluster pocket.

The protein belongs to the radical SAM superfamily. MoaA family. The cofactor is [4Fe-4S] cluster.

It catalyses the reaction GTP + AH2 + S-adenosyl-L-methionine = (8S)-3',8-cyclo-7,8-dihydroguanosine 5'-triphosphate + 5'-deoxyadenosine + L-methionine + A + H(+). It participates in cofactor biosynthesis; molybdopterin biosynthesis. In terms of biological role, catalyzes the cyclization of GTP to (8S)-3',8-cyclo-7,8-dihydroguanosine 5'-triphosphate. The protein is Probable GTP 3',8-cyclase of Pyrococcus horikoshii (strain ATCC 700860 / DSM 12428 / JCM 9974 / NBRC 100139 / OT-3).